Reading from the N-terminus, the 31-residue chain is Cyclotide cter-R (31 aa).

Residues 1–31 (GIPCGESCVFIPCTVTALLGCSCKDKVCYKN) constitute a cross-link (cyclopeptide (Gly-Asn)). 3 disulfide bridges follow: C4/C21, C8/C23, and C13/C28.

Post-translationally, this is a cyclic peptide.

The protein resides in the secreted. Functionally, probably participates in a plant defense mechanism. The polypeptide is Cyclotide cter-R (Clitoria ternatea (Butterfly pea)).